Reading from the N-terminus, the 247-residue chain is UPF0659 protein C216.03 (247 aa).

This sequence belongs to the UPF0659 family.

The protein localises to the cytoplasm. It is found in the nucleus. The sequence is that of UPF0659 protein C216.03 from Schizosaccharomyces pombe (strain 972 / ATCC 24843) (Fission yeast).